A 349-amino-acid polypeptide reads, in one-letter code: Probable FBD-associated F-box protein At5g38565 (349 aa).

The F-box domain occupies 1 to 47 (MDIFNGLPDDVLVKILSFVPTKVAVSTSILSKRWEFLWMWLPRLDFG). The FBD domain occupies 263–311 (CWNQPISVPECLLESLQIFNLSHYFGKQQDLDFVVYILKNACHLKTATI).

The sequence is that of Probable FBD-associated F-box protein At5g38565 from Arabidopsis thaliana (Mouse-ear cress).